Reading from the N-terminus, the 513-residue chain is ATP synthase subunit alpha (513 aa).

169-176 (GDRQTGKT) is an ATP binding site.

The protein belongs to the ATPase alpha/beta chains family. F-type ATPases have 2 components, CF(1) - the catalytic core - and CF(0) - the membrane proton channel. CF(1) has five subunits: alpha(3), beta(3), gamma(1), delta(1), epsilon(1). CF(0) has three main subunits: a(1), b(2) and c(9-12). The alpha and beta chains form an alternating ring which encloses part of the gamma chain. CF(1) is attached to CF(0) by a central stalk formed by the gamma and epsilon chains, while a peripheral stalk is formed by the delta and b chains.

It localises to the cell inner membrane. The enzyme catalyses ATP + H2O + 4 H(+)(in) = ADP + phosphate + 5 H(+)(out). Its function is as follows. Produces ATP from ADP in the presence of a proton gradient across the membrane. The alpha chain is a regulatory subunit. The polypeptide is ATP synthase subunit alpha (Methylobacillus flagellatus (strain ATCC 51484 / DSM 6875 / VKM B-1610 / KT)).